The following is a 928-amino-acid chain: BCAS3 microtubule associated cell migration factor (928 aa).

Position 1 is an N-acetylmethionine (Met1). One copy of the WD repeat lies at 69–114 (DLNDTSRNLEFHEIHSTGNEPPLLIMIGYSDGMQVWSIPISGEAQE). A Glycyl lysine isopeptide (Lys-Gly) (interchain with G-Cter in SUMO1); alternate cross-link involves residue Lys215. Lys215 is covalently cross-linked (Glycyl lysine isopeptide (Lys-Gly) (interchain with G-Cter in SUMO2); alternate). Required for recruitment to preautophagosomal structure in response to mitophagy stretches follow at residues 254–312 (RGGA…SRRS) and 437–560 (YGGQ…IKAP). Phosphoserine is present on residues Ser461, Ser480, and Ser488. Disordered regions lie at residues 472-515 (TSKQ…PGNP) and 755-777 (TTVISSSSSVLQSHGPSDTPQPL). 3 stretches are compositionally biased toward low complexity: residues 480-494 (SPVPGLSSSPSGSPL), 505-514 (NNFTNNNPGN), and 755-771 (TTVISSSSSVLQSHGPS). Phosphoserine occurs at positions 838, 886, and 898. The segment at 868-928 (ESPSRDVVGS…PLSLFPTGFP (61 aa)) is disordered. The segment covering 887–901 (IETLSNSSGSTSGSI) has biased composition (low complexity).

Belongs to the BCAS3 family. In terms of assembly, interacts with histone H3, ESR1, KAT2B and PELP1; the interactions occur in a estrogen-dependent manner. Interacts with beta-tubulin and VIM. Interacts (via C-terminal) with PHAF1; the interaction is requrired for the association with the phagophore. Expressed in stomach, liver, lung, kidney, prostate, testis, thyroid gland, adrenal gland, brain, heart, skeletal muscle, colon, spleen, small intestine, placenta, blood leukocyte and mammary epithelial cells. Expressed in undifferentiated ES cells. Expressed in blood islands and nascent blood vessels derived from differentiated ES cells into embryoid bodies (BD). Expressed in endothelial cells. Not detected in brain. Expressed in brain tumors (at protein level). Expressed in brain. Highly expressed in breast cancers and in glioma cell lines.

The protein localises to the nucleus. The protein resides in the cytoplasm. It localises to the cytoskeleton. Its subcellular location is the preautophagosomal structure. In terms of biological role, plays a role in angiogenesis. Participates in the regulation of cell polarity and directional endothelial cell migration by mediating both the activation and recruitment of CDC42 and the reorganization of the actin cytoskeleton at the cell leading edge. Promotes filipodia formation. Functions synergistically with PELP1 as a transcriptional coactivator of estrogen receptor-responsive genes. Stimulates histone acetyltransferase activity. Binds to chromatin. Plays a regulatory role in autophagic activity. In complex with PHAF1, associates with the preautophagosomal structure during both non-selective and selective autophagy. Probably binds phosphatidylinositol 3-phosphate (PtdIns3P) which would mediate the recruitment preautophagosomal structures. This chain is BCAS3 microtubule associated cell migration factor, found in Homo sapiens (Human).